The primary structure comprises 318 residues: Acetyl-coenzyme A carboxylase carboxyl transferase subunit alpha (318 aa).

One can recognise a CoA carboxyltransferase C-terminal domain in the interval 39–297; the sequence is RLEKRSQTAL…SEALKAMVGK (259 aa).

The protein belongs to the AccA family. In terms of assembly, acetyl-CoA carboxylase is a heterohexamer composed of biotin carboxyl carrier protein (AccB), biotin carboxylase (AccC) and two subunits each of ACCase subunit alpha (AccA) and ACCase subunit beta (AccD).

Its subcellular location is the cytoplasm. The enzyme catalyses N(6)-carboxybiotinyl-L-lysyl-[protein] + acetyl-CoA = N(6)-biotinyl-L-lysyl-[protein] + malonyl-CoA. The protein operates within lipid metabolism; malonyl-CoA biosynthesis; malonyl-CoA from acetyl-CoA: step 1/1. Its function is as follows. Component of the acetyl coenzyme A carboxylase (ACC) complex. First, biotin carboxylase catalyzes the carboxylation of biotin on its carrier protein (BCCP) and then the CO(2) group is transferred by the carboxyltransferase to acetyl-CoA to form malonyl-CoA. In Bartonella tribocorum (strain CIP 105476 / IBS 506), this protein is Acetyl-coenzyme A carboxylase carboxyl transferase subunit alpha.